Here is a 207-residue protein sequence, read N- to C-terminus: Urease accessory protein UreG (207 aa).

Residue Gly-16–Thr-23 coordinates GTP.

This sequence belongs to the SIMIBI class G3E GTPase family. UreG subfamily. As to quaternary structure, homodimer. UreD, UreF and UreG form a complex that acts as a GTP-hydrolysis-dependent molecular chaperone, activating the urease apoprotein by helping to assemble the nickel containing metallocenter of UreC. The UreE protein probably delivers the nickel.

Its subcellular location is the cytoplasm. Functionally, facilitates the functional incorporation of the urease nickel metallocenter. This process requires GTP hydrolysis, probably effectuated by UreG. The protein is Urease accessory protein UreG of Blochmanniella pennsylvanica (strain BPEN).